A 488-amino-acid chain; its full sequence is 3-octaprenyl-4-hydroxybenzoate carboxy-lyase (488 aa).

Asn-172 contacts Mn(2+). Prenylated FMN is bound by residues 175 to 177, 189 to 191, and 194 to 195; these read IYR, RWL, and RG. A Mn(2+)-binding site is contributed by Glu-238. Residue Asp-287 is the Proton donor of the active site.

It belongs to the UbiD family. Homohexamer. It depends on prenylated FMN as a cofactor. Mn(2+) serves as cofactor.

It localises to the cell membrane. It catalyses the reaction a 4-hydroxy-3-(all-trans-polyprenyl)benzoate + H(+) = a 2-(all-trans-polyprenyl)phenol + CO2. The protein operates within cofactor biosynthesis; ubiquinone biosynthesis. Catalyzes the decarboxylation of 3-octaprenyl-4-hydroxy benzoate to 2-octaprenylphenol, an intermediate step in ubiquinone biosynthesis. In Legionella pneumophila (strain Corby), this protein is 3-octaprenyl-4-hydroxybenzoate carboxy-lyase.